A 1236-amino-acid polypeptide reads, in one-letter code: MAHWTIEQEEAINARNSNLLVAAAAGSGKTTVLVERIIQLVLRDRIDIDRLLIVTFTQAAAGEMRERINAAFFKELEKGREDGHLRRQLYLLNRSSISTIHAFCSDVVRQHFHLVNIDPHFRIADSTETELIKMEVLEELLDGEYEKGNDGFLDLVEAFGSNKDDKPLEALILRLHSFIQSHPQPLSWLEEKIDNLALGEDNWAENPWASELSQQIKIELSAAQDILNQALKLSNKAGGPRGYLEAIESDQKWVELLLKAADQGLPVLYSCLQQLSFTRLGRVSRDVDENLKNQVKILRDESKKILNAINSLLGRDPLEYLQDLNEIYSLMKYLGEIIQSFAEIYQEKKREKGIVDFNDLEHLALQILSNEAVAREYRDYYSYLFIDEYQDSNLVQETILNYIKKEDNLFMVGDVKQSIYRFRLADPSLFLEKQKSYPLQDGSVNRRVDLNKNFRSHPEILNAVNYIFRHLMSEELGEIDYDEKSYLYPGLNTGQELKYQEIDKASSQEGKEKENTAKRVEICILENNPDLITKLEENETEEREIPGEAENDFIERIIEMDNTEIEALLIAQKIRQLIQEDIYDPELQCMRKIEYRDMVILLRATRNSAGIFMEQLSAEGIPVYADASSGYFDTLELNLFINLLRLIDNKRQDIALLSVMRSPIGGFSIDDFIKIRTKLIPRREKQPYSFYEAMEFYMEDNNDDLKDRLVFFIQRLKEWELESRIMALDEFMGKLFMDTGYYYYAGAMPGGGQRQANLRILLHRAREFQKSSFKGLFSFIKYIEKIKSSGSDMGNACIIGENDNVVRIMSIHKSKGLEFPVVILGGLGKNFNIRDSNENVLLHRKLGIGPRYINTQLRTYHDTIARLAIKNRIKLENLAEEMRILYVACTRPQEKLIMVGTTRQLESAWRRWSQPVNSYNQSRARSFLDWLIPIIMRHKKEGQYLREIAGGDWDREILWEDESRWKVKLISPWQLTAEEIRKKEEKYEWERLLEQGGYSCPSAESEEIIKRLNWKYPYQEAENIPAKLSVSQVSQISSGYLEDGAADTFLTRVPAFLSGEKDKKTRLSPADKGSIVHLVMQNIDYRRVSREDSINQQLGEMVEREILTSEQLAVVEVNKIWRFFQTKLGQRVLQAKWLFREAPFNLLIAASEVFPALESQEELLIQGIIDLYFYEGEDIVLLDFKSDIVHHKSEEEILAPYRVQLKLYKRALENITDHRVKESYLYFFDLNRAIRV.

Residues 2 to 457 (AHWTIEQEEA…VDLNKNFRSH (456 aa)) enclose the UvrD-like helicase ATP-binding domain. 23–30 (AAAGSGKT) contributes to the ATP binding site. Residues 515-816 (NTAKRVEICI…RIMSIHKSKG (302 aa)) enclose the UvrD-like helicase C-terminal domain.

It belongs to the helicase family. AddA subfamily. As to quaternary structure, heterodimer of AddA and AddB/RexB. Mg(2+) serves as cofactor.

It carries out the reaction Couples ATP hydrolysis with the unwinding of duplex DNA by translocating in the 3'-5' direction.. It catalyses the reaction ATP + H2O = ADP + phosphate + H(+). In terms of biological role, the heterodimer acts as both an ATP-dependent DNA helicase and an ATP-dependent, dual-direction single-stranded exonuclease. Recognizes the chi site generating a DNA molecule suitable for the initiation of homologous recombination. The AddA nuclease domain is required for chi fragment generation; this subunit has the helicase and 3' -&gt; 5' nuclease activities. The protein is ATP-dependent helicase/nuclease subunit A of Syntrophomonas wolfei subsp. wolfei (strain DSM 2245B / Goettingen).